Here is a 212-residue protein sequence, read N- to C-terminus: Peptide methionine sulfoxide reductase MsrA (212 aa).

The active site involves cysteine 52.

The protein belongs to the MsrA Met sulfoxide reductase family.

It carries out the reaction L-methionyl-[protein] + [thioredoxin]-disulfide + H2O = L-methionyl-(S)-S-oxide-[protein] + [thioredoxin]-dithiol. It catalyses the reaction [thioredoxin]-disulfide + L-methionine + H2O = L-methionine (S)-S-oxide + [thioredoxin]-dithiol. In terms of biological role, has an important function as a repair enzyme for proteins that have been inactivated by oxidation. Catalyzes the reversible oxidation-reduction of methionine sulfoxide in proteins to methionine. This is Peptide methionine sulfoxide reductase MsrA from Salmonella schwarzengrund (strain CVM19633).